The chain runs to 118 residues: MASQSQGIQQLLQAEKRAAEKVADARKRKARRLKQAKEEAQMEVDQYRREREQEFQSKQQAAMGSQGNLSAEVEQATRRQVQGMQSSQQRNRERVLAQLLGMVCDVRPQVHPNYRIAA.

A coiled-coil region spans residues 8–57 (IQQLLQAEKRAAEKVADARKRKARRLKQAKEEAQMEVDQYRREREQEFQS). The segment at 25-90 (ARKRKARRLK…VQGMQSSQQR (66 aa)) is disordered. The span at 35-55 (QAKEEAQMEVDQYRREREQEF) shows a compositional bias: basic and acidic residues. 2 stretches are compositionally biased toward polar residues: residues 56-69 (QSKQQAAMGSQGNL) and 78-89 (RRQVQGMQSSQQ).

This sequence belongs to the V-ATPase G subunit family. In terms of assembly, V-ATPase is a heteromultimeric enzyme made up of two complexes: the ATP-hydrolytic V1 complex and the proton translocation V0 complex. The V1 complex consists of three catalytic AB heterodimers that form a heterohexamer, three peripheral stalks each consisting of EG heterodimers, one central rotor including subunits D and F, and the regulatory subunits C and H. The proton translocation complex V0 consists of the proton transport subunit a, a ring of proteolipid subunits c9c'', rotary subunit d, subunits e and f, and the accessory subunits ATP6AP1/Ac45 and ATP6AP2/PRR. As to expression, expressed in brain (at protein level).

The protein resides in the melanosome. It is found in the cytoplasmic vesicle. It localises to the clathrin-coated vesicle membrane. Functionally, subunit of the V1 complex of vacuolar(H+)-ATPase (V-ATPase), a multisubunit enzyme composed of a peripheral complex (V1) that hydrolyzes ATP and a membrane integral complex (V0) that translocates protons. V-ATPase is responsible for acidifying and maintaining the pH of intracellular compartments and in some cell types, is targeted to the plasma membrane, where it is responsible for acidifying the extracellular environment. The chain is V-type proton ATPase subunit G 2 from Bos taurus (Bovine).